Consider the following 121-residue polypeptide: MHSEMLLHSVKADLHEKQEQIHQLKRVLHEIRQIKHDFSEAQHLIHRPHLNREAWRGTHAERFEDIREGMNKAYQQIKSDQVSGIIESIEGKIHSLEGDVYSIRRQITRIEHEIEKEKHKK.

This Bacillus subtilis (strain 168) protein is Protein YxiB (yxiB).